Reading from the N-terminus, the 448-residue chain is U-box domain-containing protein 30 (448 aa).

The U-box domain occupies 63 to 137 (DIPSVFICPI…YTWFSQKYVL (75 aa)). ARM repeat units lie at residues 179–219 (LMAR…SLDL) and 221–260 (SDSK…GLVE).

It catalyses the reaction S-ubiquitinyl-[E2 ubiquitin-conjugating enzyme]-L-cysteine + [acceptor protein]-L-lysine = [E2 ubiquitin-conjugating enzyme]-L-cysteine + N(6)-ubiquitinyl-[acceptor protein]-L-lysine.. The protein operates within protein modification; protein ubiquitination. Functions as an E3 ubiquitin ligase. This Arabidopsis thaliana (Mouse-ear cress) protein is U-box domain-containing protein 30 (PUB30).